The chain runs to 126 residues: Protein ApaG (126 aa).

Residues 2-126 (SDPRYQIDVS…FRLAVPGALH (125 aa)) enclose the ApaG domain.

This chain is Protein ApaG, found in Pseudomonas entomophila (strain L48).